The chain runs to 222 residues: GTP cyclohydrolase 1 (222 aa).

Cys-111, His-114, and Cys-182 together coordinate Zn(2+).

The protein belongs to the GTP cyclohydrolase I family. Homomer.

The catalysed reaction is GTP + H2O = 7,8-dihydroneopterin 3'-triphosphate + formate + H(+). It functions in the pathway cofactor biosynthesis; 7,8-dihydroneopterin triphosphate biosynthesis; 7,8-dihydroneopterin triphosphate from GTP: step 1/1. This chain is GTP cyclohydrolase 1, found in Salmonella gallinarum (strain 287/91 / NCTC 13346).